The chain runs to 263 residues: Mediator of RNA polymerase II transcription subunit 4 (263 aa).

Residues 62-106 are a coiled coil; that stretch reads QLAAEQAGIEKKMDGLREQVKEQDEEINQLQKQLKEAEHILATSI. A disordered region spans residues 221–263; the sequence is LHMTMGAGAGSVSLDTRSHKDASQDDVEVMSTDSSSSSSSDSQ. A compositionally biased stretch (low complexity) spans 251 to 263; it reads STDSSSSSSSDSQ.

Belongs to the Mediator complex subunit 4 family. Component of the Mediator complex.

The protein localises to the nucleus. In terms of biological role, component of the Mediator complex, a coactivator involved in the regulated transcription of nearly all RNA polymerase II-dependent genes. Mediator functions as a bridge to convey information from gene-specific regulatory proteins to the basal RNA polymerase II transcription machinery. Mediator is recruited to promoters by direct interactions with regulatory proteins and serves as a scaffold for the assembly of a functional preinitiation complex with RNA polymerase II and the general transcription factors. This is Mediator of RNA polymerase II transcription subunit 4 (MED4) from Aedes aegypti (Yellowfever mosquito).